A 337-amino-acid chain; its full sequence is MAVEMFYDDDADLSIIQGRKVAVIGYGSQGHAHSLSLRDSGVEVRVGLAEGSKSRPKAEEAGLTVGTPAEVSAWADVIMLLAPDTAQASIFTNDIEPNLKDGDALFFGHGLNIHFGLIKPPANVTIGMVAPKGPGHLVRRQFVDGKGVPALIAIDQDPKGEGQALALSYAKGIGGTRAGVIKTTFKEETETDLFGEQAVLCGGTEELVKTGFEVMVEAGYAPEMAYFEVLHELKLIVDLMYEGGIARMNYSVSDTAEFGGYLSGPRVIDAGTKERMKEILKDIQDGTFVKRLVANVEGGNKELEGLRKQNAEHPIEVTGAKLRGLMSWVDRPITETA.

In terms of domain architecture, KARI N-terminal Rossmann spans 3–183 (VEMFYDDDAD…GGTRAGVIKT (181 aa)). NADP(+)-binding positions include 26–29 (YGSQ), S52, S54, and 84–87 (DTAQ). The active site involves H109. Residue G135 participates in NADP(+) binding. The KARI C-terminal knotted domain maps to 184–329 (TFKEETETDL…AKLRGLMSWV (146 aa)). 4 residues coordinate Mg(2+): D192, E196, E228, and E232. S253 serves as a coordination point for substrate.

Belongs to the ketol-acid reductoisomerase family. Mg(2+) serves as cofactor.

It carries out the reaction (2R)-2,3-dihydroxy-3-methylbutanoate + NADP(+) = (2S)-2-acetolactate + NADPH + H(+). The catalysed reaction is (2R,3R)-2,3-dihydroxy-3-methylpentanoate + NADP(+) = (S)-2-ethyl-2-hydroxy-3-oxobutanoate + NADPH + H(+). The protein operates within amino-acid biosynthesis; L-isoleucine biosynthesis; L-isoleucine from 2-oxobutanoate: step 2/4. Its pathway is amino-acid biosynthesis; L-valine biosynthesis; L-valine from pyruvate: step 2/4. Functionally, involved in the biosynthesis of branched-chain amino acids (BCAA). Catalyzes an alkyl-migration followed by a ketol-acid reduction of (S)-2-acetolactate (S2AL) to yield (R)-2,3-dihydroxy-isovalerate. In the isomerase reaction, S2AL is rearranged via a Mg-dependent methyl migration to produce 3-hydroxy-3-methyl-2-ketobutyrate (HMKB). In the reductase reaction, this 2-ketoacid undergoes a metal-dependent reduction by NADPH to yield (R)-2,3-dihydroxy-isovalerate. In Nocardia farcinica (strain IFM 10152), this protein is Ketol-acid reductoisomerase (NADP(+)).